Reading from the N-terminus, the 290-residue chain is 4-diphosphocytidyl-2-C-methyl-D-erythritol kinase (290 aa).

The active site involves lysine 13. 96-106 (PMGGGIGGGSS) provides a ligand contact to ATP. Aspartate 138 is an active-site residue.

It belongs to the GHMP kinase family. IspE subfamily.

It carries out the reaction 4-CDP-2-C-methyl-D-erythritol + ATP = 4-CDP-2-C-methyl-D-erythritol 2-phosphate + ADP + H(+). The protein operates within isoprenoid biosynthesis; isopentenyl diphosphate biosynthesis via DXP pathway; isopentenyl diphosphate from 1-deoxy-D-xylulose 5-phosphate: step 3/6. Functionally, catalyzes the phosphorylation of the position 2 hydroxy group of 4-diphosphocytidyl-2C-methyl-D-erythritol. In Vibrio vulnificus (strain CMCP6), this protein is 4-diphosphocytidyl-2-C-methyl-D-erythritol kinase.